We begin with the raw amino-acid sequence, 210 residues long: Na(+)-translocating NADH-quinone reductase subunit D (210 aa).

6 consecutive transmembrane segments (helical) span residues 14–34 (PIINNNPIALQILGVCSALAV), 42–62 (LVMTIALTAVTAFSNLFISLI), 72–92 (IIVQMTIIASLVIVVDQVLQA), 96–116 (AISKQLSVFVGLIITNCIVMG), 131–151 (FMDGIGNGLGYGAILLSVGVV), and 178–198 (NGLLLLPPSAFFLIGGLIWLI).

The protein belongs to the NqrDE/RnfAE family. Composed of six subunits; NqrA, NqrB, NqrC, NqrD, NqrE and NqrF.

It localises to the cell inner membrane. The catalysed reaction is a ubiquinone + n Na(+)(in) + NADH + H(+) = a ubiquinol + n Na(+)(out) + NAD(+). Functionally, NQR complex catalyzes the reduction of ubiquinone-1 to ubiquinol by two successive reactions, coupled with the transport of Na(+) ions from the cytoplasm to the periplasm. NqrA to NqrE are probably involved in the second step, the conversion of ubisemiquinone to ubiquinol. This chain is Na(+)-translocating NADH-quinone reductase subunit D, found in Shewanella frigidimarina (strain NCIMB 400).